The primary structure comprises 437 residues: Transmembrane protein with metallophosphoesterase domain (437 aa).

5 consecutive transmembrane segments (helical) span residues 7 to 27, 41 to 61, 87 to 107, 116 to 136, and 164 to 184; these read LSAE…MLIS, ALLF…LGSL, IIVL…FFLV, LLSF…FVFG, and VLAL…AAQP. The a divalent metal cation site is built by Asp211, His213, Asp243, Asn274, His376, and His378.

Belongs to the metallophosphoesterase superfamily. LOC643853 family. A divalent metal cation is required as a cofactor.

The protein localises to the membrane. The chain is Transmembrane protein with metallophosphoesterase domain (tmppe) from Danio rerio (Zebrafish).